The chain runs to 685 residues: Protein snwA (685 aa).

Disordered stretches follow at residues 1–62, 88–112, 347–573, and 605–685; these read MTSL…GYLP, RKGK…TSIV, LAED…DSIY, and AVSN…SKKR. 2 stretches are compositionally biased toward low complexity: residues 30-41 and 93-102; these read PQQQKQQQQQQQ and KSSNSNTSNM. The segment at 194 to 360 is SNW; sequence ATYIKYTPSN…VRNERSGIIQ (167 aa). A compositionally biased stretch (acidic residues) spans 370-381; it reads DSDNDNDNDSSS. The span at 399–494 shows a compositional bias: basic and acidic residues; it reads RSTERIPSRN…DRYSKRRSDS (96 aa). A compositionally biased stretch (acidic residues) spans 495–507; sequence DSDSDSDSSDSED. Positions 508–556 are enriched in basic and acidic residues; the sequence is ERVRRERKEKLERDKIRMEKKRELEREYRLEASGKKSKFNRDQDRDISE. Polar residues predominate over residues 618–631; sequence EDNTSIQDVLSNSR. Residues 646-685 are compositionally biased toward basic and acidic residues; sequence PNKEFSGTDRSKDRTGPVAFEKEKKKSDDPFGFDDFSKKR.

The protein belongs to the SNW family. As to quaternary structure, interacts with cypE.

Its subcellular location is the nucleus. This is Protein snwA (snwA) from Dictyostelium discoideum (Social amoeba).